Reading from the N-terminus, the 333-residue chain is Protein pelota homolog (333 aa).

Belongs to the eukaryotic release factor 1 family. Pelota subfamily. Monomer. The cofactor is a divalent metal cation.

The protein localises to the cytoplasm. Functionally, may function in recognizing stalled ribosomes, interact with stem-loop structures in stalled mRNA molecules, and effect endonucleolytic cleavage of the mRNA. May play a role in the release non-functional ribosomes and degradation of damaged mRNAs. Has endoribonuclease activity. This Pyrobaculum arsenaticum (strain DSM 13514 / JCM 11321 / PZ6) protein is Protein pelota homolog.